We begin with the raw amino-acid sequence, 208 residues long: Superoxide dismutase [Mn] 2 (208 aa).

Positions 28, 83, 165, and 169 each coordinate Mn(2+).

The protein belongs to the iron/manganese superoxide dismutase family. In terms of assembly, homodimer. Mn(2+) is required as a cofactor.

It carries out the reaction 2 superoxide + 2 H(+) = H2O2 + O2. Its function is as follows. Destroys superoxide anion radicals which are normally produced within the cells and which are toxic to biological systems. This is Superoxide dismutase [Mn] 2 (sodA2) from Bacillus anthracis.